A 259-amino-acid polypeptide reads, in one-letter code: Type III pantothenate kinase (259 aa).

6 to 13 contributes to the ATP binding site; the sequence is DVGNTNCT. Residue 107–110 participates in substrate binding; the sequence is GSDR. D109 acts as the Proton acceptor in catalysis. D129 serves as a coordination point for K(+). T132 is an ATP binding site. Residue T184 coordinates substrate.

Belongs to the type III pantothenate kinase family. As to quaternary structure, homodimer. Requires NH4(+) as cofactor. The cofactor is K(+).

It is found in the cytoplasm. The catalysed reaction is (R)-pantothenate + ATP = (R)-4'-phosphopantothenate + ADP + H(+). Its pathway is cofactor biosynthesis; coenzyme A biosynthesis; CoA from (R)-pantothenate: step 1/5. Catalyzes the phosphorylation of pantothenate (Pan), the first step in CoA biosynthesis. This is Type III pantothenate kinase from Listeria innocua serovar 6a (strain ATCC BAA-680 / CLIP 11262).